Consider the following 93-residue polypeptide: Acylphosphatase (93 aa).

Positions 4-91 (TLHLVIHGRV…PAGTGFRVAA (88 aa)) constitute an Acylphosphatase-like domain. Active-site residues include Arg19 and Asn37.

This sequence belongs to the acylphosphatase family.

It catalyses the reaction an acyl phosphate + H2O = a carboxylate + phosphate + H(+). This chain is Acylphosphatase (acyP), found in Azorhizobium caulinodans (strain ATCC 43989 / DSM 5975 / JCM 20966 / LMG 6465 / NBRC 14845 / NCIMB 13405 / ORS 571).